We begin with the raw amino-acid sequence, 258 residues long: Type III pantothenate kinase (258 aa).

Residue 6–13 (DVGNTNIV) coordinates ATP. Substrate contacts are provided by residues Y100 and 107 to 110 (GADR). D109 serves as the catalytic Proton acceptor. D129 lines the K(+) pocket. T132 is a binding site for ATP. T184 contacts substrate.

Belongs to the type III pantothenate kinase family. As to quaternary structure, homodimer. It depends on NH4(+) as a cofactor. K(+) is required as a cofactor.

The protein resides in the cytoplasm. The catalysed reaction is (R)-pantothenate + ATP = (R)-4'-phosphopantothenate + ADP + H(+). Its pathway is cofactor biosynthesis; coenzyme A biosynthesis; CoA from (R)-pantothenate: step 1/5. Its function is as follows. Catalyzes the phosphorylation of pantothenate (Pan), the first step in CoA biosynthesis. In Desulfitobacterium hafniense (strain DSM 10664 / DCB-2), this protein is Type III pantothenate kinase.